We begin with the raw amino-acid sequence, 371 residues long: Putative glutamate--cysteine ligase 2 (371 aa).

It belongs to the glutamate--cysteine ligase type 2 family. YbdK subfamily.

The catalysed reaction is L-cysteine + L-glutamate + ATP = gamma-L-glutamyl-L-cysteine + ADP + phosphate + H(+). Functionally, ATP-dependent carboxylate-amine ligase which exhibits weak glutamate--cysteine ligase activity. In Burkholderia multivorans (strain ATCC 17616 / 249), this protein is Putative glutamate--cysteine ligase 2.